A 931-amino-acid chain; its full sequence is Beta-mannosidase A (931 aa).

Residues 1-21 (MRHSIGLAAALLAPTLPVALG) form the signal peptide. Residues asparagine 40, asparagine 79, asparagine 247, asparagine 282, asparagine 316, asparagine 326, and asparagine 347 are each glycosylated (N-linked (GlcNAc...) asparagine). Glutamate 479 acts as the Proton donor in catalysis. 8 N-linked (GlcNAc...) asparagine glycosylation sites follow: asparagine 550, asparagine 608, asparagine 658, asparagine 738, asparagine 790, asparagine 798, asparagine 830, and asparagine 918.

Belongs to the glycosyl hydrolase 2 family. Beta-mannosidase A subfamily. In terms of assembly, homodimer.

The protein localises to the secreted. The enzyme catalyses Hydrolysis of terminal, non-reducing beta-D-mannose residues in beta-D-mannosides.. It functions in the pathway glycan metabolism; N-glycan degradation. Functionally, exoglycosidase that cleaves the single beta-linked mannose residue from the non-reducing end of beta-mannosidic oligosaccharides of various complexity and length. Involved in the degradation of polymeric mannan and galactomannan. This Aspergillus niger (strain ATCC MYA-4892 / CBS 513.88 / FGSC A1513) protein is Beta-mannosidase A (mndA).